Reading from the N-terminus, the 476-residue chain is Protein transport protein Sec61 subunit alpha-like 2 (476 aa).

Residues 2–33 are Cytoplasmic-facing; the sequence is AIKFLEVIKPFCAVLPEIQKPERRIQFKEKVL. A helical transmembrane segment spans residues 34-53; it reads WTAITLFIFLVCCQIPLFGI. Over 54 to 76 the chain is Lumenal; sequence MSSDSADPFYWMRVIMASNRGTL. A helical transmembrane segment spans residues 77-96; it reads MELGISPIVTSGLIMQLLAG. The Cytoplasmic portion of the chain corresponds to 97-117; sequence AKIIEVGDTPKDRALFNGAQK. The helical transmembrane segment at 118 to 138 threads the bilayer; it reads LFGMIITIGQAVVYVMTGMYG. Over 139–144 the chain is Lumenal; that stretch reads DPSEMG. Residues 145 to 165 form a helical membrane-spanning segment; that stretch reads AGICLLIIIQLFVAGLIVLLL. Residues 166 to 172 are Cytoplasmic-facing; the sequence is DELLQKG. The chain crosses the membrane as a helical span at residues 173–193; the sequence is YGLGSGISLFIATNICETIVW. The Lumenal portion of the chain corresponds to 194–240; the sequence is KAFSPTTVNTGRGTEFEGAIIALFHLLATRTDKVRALREAFYRQNLP. Residues 241 to 261 form a helical membrane-spanning segment; sequence NLMNLIATIFVFAVVIYFQGF. Topologically, residues 262–288 are cytoplasmic; that stretch reads RVDLPIKSARYRGQYNTYPIKLFYTSN. The chain crosses the membrane as a helical span at residues 289–309; that stretch reads IPIILQSALVSNLYVISQMLS. At 310–354 the chain is on the lumenal side; that stretch reads TRFSGNFLVNLLGTWSDTSTGGPARAYPVGGLCYYLSPPESFGTV. A helical membrane pass occupies residues 355 to 375; the sequence is LEDPIHAIIYIIFMLGSCAFF. Residues 376 to 420 are Cytoplasmic-facing; that stretch reads SKTWIEVSGSSAKDVAKQLKEQQMVMRGHRETSMVHELNRYIPTA. The chain crosses the membrane as a helical span at residues 421–441; that stretch reads AAFGGLCIGGLSVMADFLGAI. Topologically, residues 442-445 are lumenal; it reads GSGT. Residues 446–462 traverse the membrane as a helical segment; that stretch reads GILLAVTIIYQYFEIFV. Residues 463-476 are Cytoplasmic-facing; the sequence is KEQSEVGSVGALLF.

It belongs to the SecY/SEC61-alpha family. The SEC61 channel-forming translocon complex consists of channel-forming core components SEC61A1, SEC61B and SEC61G and different auxiliary components such as SEC62 and SEC63.

Its subcellular location is the endoplasmic reticulum membrane. Functionally, component of SEC61 channel-forming translocon complex that mediates transport of signal peptide-containing precursor polypeptides across the endoplasmic reticulum (ER). Forms a ribosome receptor and a gated pore in the ER membrane, both functions required for cotranslational translocation of nascent polypeptides. In Danio rerio (Zebrafish), this protein is Protein transport protein Sec61 subunit alpha-like 2 (sec61al2).